The following is a 689-amino-acid chain: Protein-glutamine gamma-glutamyltransferase 2 (689 aa).

Residues C278, H336, and D359 contribute to the active site. The Ca(2+) site is built by N399, D401, E437, E447, and E452. The interval 427-453 is disordered; that stretch reads STKSVGRDSREDITHTYKYPEGSEKER. Basic and acidic residues predominate over residues 431–441; the sequence is VGRDSREDITH. 476-483 is a GTP binding site; sequence RIKLSEGA. A Ca(2+)-binding site is contributed by E539. A GTP-binding site is contributed by 580 to 583; sequence RDVY.

This sequence belongs to the transglutaminase superfamily. Transglutaminase family. As to quaternary structure, monomer. Ca(2+) is required as a cofactor. As to expression, predominates in mature erythrocytes. Also found in kidney and cardiac muscle.

The protein resides in the cytoplasm. It is found in the cytosol. The protein localises to the nucleus. It localises to the chromosome. Its subcellular location is the secreted. The protein resides in the extracellular space. It is found in the extracellular matrix. The protein localises to the cell membrane. It localises to the mitochondrion. It catalyses the reaction L-glutaminyl-[protein] + L-lysyl-[protein] = [protein]-L-lysyl-N(6)-5-L-glutamyl-[protein] + NH4(+). The catalysed reaction is L-glutaminyl-[protein] + serotonin = 5-serotonyl-L-glutamyl-[protein] + NH4(+). The enzyme catalyses L-glutaminyl-[protein] + dopamine = 5-dopaminyl-L-glutamyl-[protein] + NH4(+). It carries out the reaction L-glutaminyl-[protein] + histamine = 5-histaminyl-L-glutamyl-[protein] + NH4(+). It catalyses the reaction L-glutaminyl-[protein] + (R)-noradrenaline = 5-(R)-noradrenalinyl-L-glutamyl-[protein] + NH4(+). The catalysed reaction is L-glutaminyl-[protein] + H2O = L-glutamyl-[protein] + NH4(+). Acyltransferase activity is regulated by the binding of GTP and Ca(2+): inactivated by GTP, which stabilizes its closed structure, thereby obstructing the accessibility of substrates to the active sites. In contrast, Ca(2+) acts as a cofactor by inducing conformational change to the active open form. In absence of Ca(2+), Mg(2+) may bind Ca(2+)-binding sites, promoting GTP-binding and subsequent inhibition of the acyltransferase activity. Functionally, calcium-dependent acyltransferase that catalyzes the formation of covalent bonds between peptide-bound glutamine and various primary amines, such as gamma-amino group of peptide-bound lysine, or mono- and polyamines, thereby producing cross-linked or aminated proteins, respectively. Involved in many biological processes, such as bone development, angiogenesis, wound healing, cellular differentiation, chromatin modification and apoptosis. Acts as a protein-glutamine gamma-glutamyltransferase by mediating the cross-linking of proteins: under physiological conditions, the protein cross-linking activity is inhibited by GTP; inhibition is relieved by Ca(2+) in response to various stresses. When secreted, catalyzes cross-linking of proteins of the extracellular matrix, resulting in the formation of scaffolds. Plays a key role during apoptosis, both by (1) promoting the cross-linking of cytoskeletal proteins resulting in condensation of the cytoplasm, and by (2) mediating cross-linking proteins of the extracellular matrix, resulting in the irreversible formation of scaffolds that stabilize the integrity of the dying cells before their clearance by phagocytosis, thereby preventing the leakage of harmful intracellular components. In addition to protein cross-linking, can use different monoamine substrates to catalyze a vast array of protein post-translational modifications: mediates aminylation of serotonin, dopamine, noradrenaline or histamine into glutamine residues of target proteins to generate protein serotonylation, dopaminylation, noradrenalinylation or histaminylation, respectively. Mediates protein serotonylation of small GTPases during activation and aggregation of platelets, leading to constitutive activation of these GTPases. Plays a key role in chromatin organization by mediating serotonylation and dopaminylation of histone H3. Catalyzes serotonylation of 'Gln-5' of histone H3 (H3Q5ser) during serotonergic neuron differentiation, thereby facilitating transcription. Acts as a mediator of neurotransmission-independent role of nuclear dopamine in ventral tegmental area (VTA) neurons: catalyzes dopaminylation of 'Gln-5' of histone H3 (H3Q5dop), thereby regulating relapse-related transcriptional plasticity in the reward system. Also acts as a protein deamidase by mediating the side chain deamidation of specific glutamine residues of proteins to glutamate. May also act as an isopeptidase cleaving the previously formed cross-links. Also able to participate in signaling pathways independently of its acyltransferase activity: acts as a signal transducer in alpha-1 adrenergic receptor-mediated stimulation of phospholipase C-delta (PLCD) activity and is required for coupling alpha-1 adrenergic agonists to the stimulation of phosphoinositide lipid metabolism. This chain is Protein-glutamine gamma-glutamyltransferase 2, found in Gallus gallus (Chicken).